The primary structure comprises 521 residues: MIKQALISVSDKTGIVDFAKSLSDLGVKLLSTGGTAKLLADAGLPVTEVADYTGFPEMLDGRVKTLHPKVHGGILARRDLPEHMQALEQHGIPTIDLLVVNLYPFVATIAKDDCTLADAIENIDIGGPTMLRSAAKNHRDVTVVVDPADYAVVLDEMKANGNTVGYPTNFRLATKVFAHTAQYDGAITNYLTSLTDELQHASRSTYPATLNLAFDKVQDLRYGENPHQSAAFYRDLATPAGALANYRQLQGKELSYNNIADSDAAWECVKTFDAPACVIIKHANPCGVAVGNDSADAYAKAFQTDPTSAFGGIIAFNREVDEAAAQAVAKQFVEVLIAPSFSDAAKQVFAAKQNVRLLEIALGDGHNAFDLKRVGGGLLVQSLDSRNVQPSELRVVTKRQPTAKEMDDLLFAWRVAKYVKSNAIVFCGNGMTLGVGAGQMSRVDSARIASIKAQNAGLTLAGSAVASDAFFPFRDGLDVVVAAGATCVIQPGGSMRDDEVIAAADEHGIAMVLTGVRHFRH.

Residues 1–145 form the MGS-like domain; sequence MIKQALISVS…KNHRDVTVVV (145 aa).

This sequence belongs to the PurH family.

It catalyses the reaction (6R)-10-formyltetrahydrofolate + 5-amino-1-(5-phospho-beta-D-ribosyl)imidazole-4-carboxamide = 5-formamido-1-(5-phospho-D-ribosyl)imidazole-4-carboxamide + (6S)-5,6,7,8-tetrahydrofolate. The enzyme catalyses IMP + H2O = 5-formamido-1-(5-phospho-D-ribosyl)imidazole-4-carboxamide. It participates in purine metabolism; IMP biosynthesis via de novo pathway; 5-formamido-1-(5-phospho-D-ribosyl)imidazole-4-carboxamide from 5-amino-1-(5-phospho-D-ribosyl)imidazole-4-carboxamide (10-formyl THF route): step 1/1. The protein operates within purine metabolism; IMP biosynthesis via de novo pathway; IMP from 5-formamido-1-(5-phospho-D-ribosyl)imidazole-4-carboxamide: step 1/1. The protein is Bifunctional purine biosynthesis protein PurH of Burkholderia orbicola (strain MC0-3).